Here is a 162-residue protein sequence, read N- to C-terminus: Interleukin-15 (162 aa).

The first 29 residues, 1 to 29, serve as a signal peptide directing secretion; it reads MRISKPHLRSISIQCYLCLLLNSHFLTEA. A propeptide spanning residues 30–48 is cleaved from the precursor; that stretch reads GIHVFILGCFSAGLPKTEA. Intrachain disulfides connect Cys83–Cys133 and Cys90–Cys136. Residue Asn127 is glycosylated (N-linked (GlcNAc...) asparagine).

It belongs to the IL-15/IL-21 family. In terms of tissue distribution, most abundant in placenta and skeletal muscle. It is also detected in the heart, lung, liver and kidney. IL15-S21AA is preferentially expressed in tissues such as testis and thymus.

Its subcellular location is the secreted. The protein localises to the cytoplasm. It localises to the nucleus. Its function is as follows. Cytokine that plays a major role in the development of inflammatory and protective immune responses to microbial invaders and parasites by modulating immune cells of both the innate and adaptive immune systems. Stimulates the proliferation of natural killer cells, T-cells and B-cells and promotes the secretion of several cytokines. In monocytes, induces the production of IL8 and monocyte chemotactic protein 1/CCL2, two chemokines that attract neutrophils and monocytes respectively to sites of infection. Unlike most cytokines, which are secreted in soluble form, IL15 is expressed in association with its high affinity IL15RA on the surface of IL15-producing cells and delivers signals to target cells that express IL2RB and IL2RG receptor subunits. Binding to its receptor triggers the phosphorylation of JAK1 and JAK3 and the recruitment and subsequent phosphorylation of signal transducer and activator of transcription-3/STAT3 and STAT5. In mast cells, induces the rapid tyrosine phosphorylation of STAT6 and thereby controls mast cell survival and release of cytokines such as IL4. The sequence is that of Interleukin-15 (IL15) from Homo sapiens (Human).